The primary structure comprises 224 residues: tRNA (guanine-N(7)-)-methyltransferase (224 aa).

Glutamate 57, aspartate 82, and aspartate 109 together coordinate S-adenosyl-L-methionine. A substrate-binding site is contributed by aspartate 167.

Belongs to the class I-like SAM-binding methyltransferase superfamily. TrmB family.

It carries out the reaction guanosine(46) in tRNA + S-adenosyl-L-methionine = N(7)-methylguanosine(46) in tRNA + S-adenosyl-L-homocysteine. The protein operates within tRNA modification; N(7)-methylguanine-tRNA biosynthesis. Catalyzes the formation of N(7)-methylguanine at position 46 (m7G46) in tRNA. The protein is tRNA (guanine-N(7)-)-methyltransferase of Chloroflexus aggregans (strain MD-66 / DSM 9485).